The primary structure comprises 132 residues: 3-aminoacrylate deaminase RutC (132 aa).

The protein belongs to the RutC family.

It carries out the reaction (Z)-3-aminoacrylate + H2O + H(+) = 3-oxopropanoate + NH4(+). Involved in pyrimidine catabolism. Catalyzes the deamination of 3-aminoacrylate to malonic semialdehyde, a reaction that can also occur spontaneously. RutC may facilitate the reaction and modulate the metabolic fitness, rather than catalyzing essential functions. This Cronobacter turicensis (strain DSM 18703 / CCUG 55852 / LMG 23827 / z3032) protein is 3-aminoacrylate deaminase RutC.